The following is a 250-amino-acid chain: Expansin-like B1 (250 aa).

An N-terminal signal peptide occupies residues 1–24; that stretch reads MKHSHVLLLLFVQVIVLLPLLCLS. Residues 45-149 form the Expansin-like EG45 domain; it reads RGHCGYGEFG…QRIPCRYAGY (105 aa). Asparagine 72 is a glycosylation site (N-linked (GlcNAc...) asparagine). The Expansin-like CBD domain maps to 163–245; that stretch reads HYLAILVLYV…DWTAGATYDS (83 aa).

This sequence belongs to the expansin family. Expansin-like B subfamily.

The protein localises to the secreted. The polypeptide is Expansin-like B1 (EXLB1) (Arabidopsis thaliana (Mouse-ear cress)).